The chain runs to 424 residues: DNA primase DnaG (424 aa).

The Toprim domain occupies 166–241; that stretch reads DTIIIVEGRA…KVDFIARAPE (76 aa). Mg(2+) is bound by residues Glu-172, Asp-215, and Asp-217.

This sequence belongs to the archaeal DnaG primase family. Forms a ternary complex with MCM helicase and DNA. Component of the archaeal exosome complex. The cofactor is Mg(2+).

The catalysed reaction is ssDNA + n NTP = ssDNA/pppN(pN)n-1 hybrid + (n-1) diphosphate.. Functionally, RNA polymerase that catalyzes the synthesis of short RNA molecules used as primers for DNA polymerase during DNA replication. Also part of the exosome, which is a complex involved in RNA degradation. Acts as a poly(A)-binding protein that enhances the interaction between heteromeric, adenine-rich transcripts and the exosome. This is DNA primase DnaG from Staphylothermus marinus (strain ATCC 43588 / DSM 3639 / JCM 9404 / F1).